Consider the following 736-residue polypeptide: Catalase-peroxidase (736 aa).

Positions 100-223 (WHSAGTYRIG…LAAVQMGLIY (124 aa)) form a cross-link, tryptophyl-tyrosyl-methioninium (Trp-Tyr) (with M-249). H101 serves as the catalytic Proton acceptor. Residues 223–249 (YVNPEGPDGKPDPVAAARDIRETFRRM) constitute a cross-link (tryptophyl-tyrosyl-methioninium (Tyr-Met) (with W-100)). A heme b-binding site is contributed by H264.

It belongs to the peroxidase family. Peroxidase/catalase subfamily. As to quaternary structure, homodimer or homotetramer. It depends on heme b as a cofactor. In terms of processing, formation of the three residue Trp-Tyr-Met cross-link is important for the catalase, but not the peroxidase activity of the enzyme.

The catalysed reaction is H2O2 + AH2 = A + 2 H2O. It carries out the reaction 2 H2O2 = O2 + 2 H2O. Bifunctional enzyme with both catalase and broad-spectrum peroxidase activity. This chain is Catalase-peroxidase, found in Geobacillus kaustophilus (strain HTA426).